Here is an 83-residue protein sequence, read N- to C-terminus: Aspergillic acid biosynthesis cluster protein F (83 aa).

Its pathway is secondary metabolite biosynthesis. Part of the gene cluster that mediates the biosynthesis of aspergillic acid, a hydroxamic acid-containing pyrazinone with aliphatic side chains that originates from leucine (Leu) and isoleucine (Ile). Aspergillic acid has antibiotic properties and was shown to be lethal to mice. The first step in the pathway is the production of deoxyaspergillic acid via a condensation between the Ile amine and the Leu carboxylic acid, followed by a reductive release from the protein forming the dipeptide aldehyde NH(2)-Leu-Ile-CHO, which could undergo an intermolecular cyclization resulting in a dihydropyrazinone. As the NRPS asaC lacks a condensation domain, it is improbable that it is responsible for condensation of Leu and Ile. One possibility is that asaC acts on a previously condensed dipeptide and functions as a Leu-Ile reductase to yield deoxyaspergillic acid. After asaC forms deoxyaspergillic acid, the cytochrome P450 asaD oxidizes the pyrazinone to the hydroxamic acid-containing bioactive metabolite aspergillic acid. The hydroxylase/desaturase asaB can then convert aspergillic acid to hydroxyaspergillic acid. Both aspergillic acid and hydroxyaspergillic acid can form complexes with iron producing ferriaspergillin analogs. The sequence is that of Aspergillic acid biosynthesis cluster protein F from Aspergillus flavus (strain ATCC 200026 / FGSC A1120 / IAM 13836 / NRRL 3357 / JCM 12722 / SRRC 167).